The chain runs to 632 residues: tRNA-guanine(15) transglycosylase (632 aa).

The active-site Nucleophile is aspartate 86. Substrate is bound by residues aspartate 121 and glycine 186. The 76-residue stretch at 553–628 folds into the PUA domain; it reads NLRVFVKNES…IAVKIHEGRD (76 aa).

It belongs to the archaeosine tRNA-ribosyltransferase family. Zn(2+) serves as cofactor.

The catalysed reaction is guanosine(15) in tRNA + 7-cyano-7-deazaguanine = 7-cyano-7-carbaguanosine(15) in tRNA + guanine. Its pathway is tRNA modification; archaeosine-tRNA biosynthesis. In terms of biological role, exchanges the guanine residue with 7-cyano-7-deazaguanine (preQ0) at position 15 in the dihydrouridine loop (D-loop) of archaeal tRNAs. This is tRNA-guanine(15) transglycosylase from Thermoplasma volcanium (strain ATCC 51530 / DSM 4299 / JCM 9571 / NBRC 15438 / GSS1).